The chain runs to 184 residues: Glutathione-regulated potassium-efflux system ancillary protein KefG (184 aa).

This sequence belongs to the NAD(P)H dehydrogenase (quinone) family. KefG subfamily. In terms of assembly, interacts with KefB.

The protein localises to the cell inner membrane. It carries out the reaction a quinone + NADH + H(+) = a quinol + NAD(+). It catalyses the reaction a quinone + NADPH + H(+) = a quinol + NADP(+). Its function is as follows. Regulatory subunit of a potassium efflux system that confers protection against electrophiles. Required for full activity of KefB. The polypeptide is Glutathione-regulated potassium-efflux system ancillary protein KefG (Shigella dysenteriae serotype 1 (strain Sd197)).